The following is a 632-amino-acid chain: PWWP domain-containing protein 5 (632 aa).

Residues 97–158 (DSDLVWAKLR…ASQIKPFHQN (62 aa)) form the PWWP domain. The interval 310–452 (RKTDYKDNAE…AERKISSPDE (143 aa)) is disordered. 4 stretches are compositionally biased toward basic and acidic residues: residues 313-326 (DYKDNAEQTKEKTL), 339-364 (STEKLDGKSHSEKKRKVESSESGKSE), 371-383 (QQKEDSVSKHSNE), and 425-449 (KSTEVENEKTKKPRHQELAERKISS). The Nuclear localization signal motif lies at 352–359 (KRKVESSE).

The protein belongs to the PDP family. In terms of assembly, component of the PRC2 (polycomb repressive complex 2) complex which regulates histone methylation on histone H3K27.

It is found in the nucleus. Functionally, may influence gene expression by regulating the function of the PRC2 complex and modulating H3K27me3 level. This chain is PWWP domain-containing protein 5, found in Arabidopsis thaliana (Mouse-ear cress).